Consider the following 454-residue polypeptide: MSDNDTIVAQATPPGRGGVGILRISGFKAREVAETVLGKLPKPRYADYLPFKDADGSVLDQGIALWFPGPNSFTGEDVLELQGHGGPVILDLLLKRILTIPGLRIARPGEFSERAFLYDKLDLAQAEAIADLIDASSEQAARSALNSLQGAFSARVNHLVEALTHLRIYVEAAIDFPDEEIDFLSDGKIEAQLNDVIADLDAVRAEARQGSLLREGMKVVIAGRPNAGKSSLLNALAGREAAIVTDIAGTTRDVLREHIHIDGMPLHIIDTAGLREASDEVERIGIERAWQEIEQADRVLFMVDGTTTDAVDPAEIWPEFIARLPAKLPITVVRNKADITGETLGMSEVNGHALIRLSARTGEGVEVLRNHLKQSMGFDTNMEGGFLARRRHLQALEQAAEHLQQGKAQLLGAWAGELLAEELRLAQQNLSEITGEFTSDDLLGRIFSSFCIGK.

The (6S)-5-formyl-5,6,7,8-tetrahydrofolate site is built by R23, E80, and K120. One can recognise a TrmE-type G domain in the interval 216 to 377 (GMKVVIAGRP…LRNHLKQSMG (162 aa)). N226 contacts K(+). GTP-binding positions include 226–231 (NAGKSS), 245–251 (TDIAGTT), 270–273 (DTAG), 335–338 (NKAD), and 358–360 (SAR). Mg(2+) is bound at residue S230. Positions 245, 247, and 250 each coordinate K(+). T251 is a Mg(2+) binding site. K454 provides a ligand contact to (6S)-5-formyl-5,6,7,8-tetrahydrofolate.

The protein belongs to the TRAFAC class TrmE-Era-EngA-EngB-Septin-like GTPase superfamily. TrmE GTPase family. In terms of assembly, homodimer. Heterotetramer of two MnmE and two MnmG subunits. K(+) serves as cofactor.

It localises to the cytoplasm. Functionally, exhibits a very high intrinsic GTPase hydrolysis rate. Involved in the addition of a carboxymethylaminomethyl (cmnm) group at the wobble position (U34) of certain tRNAs, forming tRNA-cmnm(5)s(2)U34. This chain is tRNA modification GTPase MnmE, found in Escherichia coli O139:H28 (strain E24377A / ETEC).